We begin with the raw amino-acid sequence, 275 residues long: MEFLKHYEDDEDQDDENNTKDENVNKINKRQHFEIENVIDEIPDLPLSFFENFKKIKHYSSEIIDETNKKTRLFEHVEGNYPTFIYFKVPTKSRNDIKELIEQVKEIGNEINIKQDTETCFHISISRTFPIREHHIETFTQELKKTLKNQRSIDIQLSKECCVFINDNQSRIFLSIPINQSFKSNILKLIERIDSCLSLFKFPKYYDNPEPHLSISWSLITNNNNETNDENINYIPLNKFKNKEIIRDNLKLTDSFKVSRIFWNIGKTESFIDLQ.

A disordered region spans residues 1–25; that stretch reads MEFLKHYEDDEDQDDENNTKDENVN. Histidine 122 serves as the catalytic Proton acceptor. Residues 122–124, tyrosine 206, and 208–214 contribute to the AMP site; these read HIS and NPEPHLS. Residues tyrosine 206 and 210–214 each bind UMP; that span reads EPHLS. Histidine 212 (proton donor) is an active-site residue.

This sequence belongs to the 2H phosphoesterase superfamily. USB1 family.

It is found in the nucleus. The catalysed reaction is a 3'-end uridylyl-uridine-RNA = a 3'-end 2',3'-cyclophospho-uridine-RNA + uridine. 3'-5' RNA exonuclease that trims the 3' end of oligo(U) tracts of the pre-U6 small nuclear RNA (snRNA) molecule, leading to the formation of a mature U6 snRNA 3' end-terminated with a 2',3'-cyclic phosphate. Participates in the U6 snRNA 3' end processing that prevents U6 snRNA degradation. The chain is U6 snRNA phosphodiesterase 1 from Dictyostelium discoideum (Social amoeba).